The chain runs to 195 residues: uncharacterized protein (195 aa).

The HTH tetR-type domain maps to 6-66; it reads VESRKRLLKA…ELITDFHSRV (61 aa). Positions 29-48 form a DNA-binding region, H-T-H motif; that stretch reads KVSEIVKKAGFTQPSFYLYF.

This is an uncharacterized protein from Bacillus subtilis (strain 168).